Here is a 500-residue protein sequence, read N- to C-terminus: Protein nucleotidyltransferase YdiU (500 aa).

Glycine 98, glycine 100, arginine 101, lysine 124, aspartate 136, glycine 137, arginine 187, and arginine 194 together coordinate ATP. Aspartate 263 (proton acceptor) is an active-site residue. Mg(2+) is bound by residues asparagine 264 and aspartate 273. Residue aspartate 273 participates in ATP binding.

The protein belongs to the SELO family. The cofactor is Mg(2+). Requires Mn(2+) as cofactor.

The catalysed reaction is L-seryl-[protein] + ATP = 3-O-(5'-adenylyl)-L-seryl-[protein] + diphosphate. It carries out the reaction L-threonyl-[protein] + ATP = 3-O-(5'-adenylyl)-L-threonyl-[protein] + diphosphate. It catalyses the reaction L-tyrosyl-[protein] + ATP = O-(5'-adenylyl)-L-tyrosyl-[protein] + diphosphate. The enzyme catalyses L-histidyl-[protein] + UTP = N(tele)-(5'-uridylyl)-L-histidyl-[protein] + diphosphate. The catalysed reaction is L-seryl-[protein] + UTP = O-(5'-uridylyl)-L-seryl-[protein] + diphosphate. It carries out the reaction L-tyrosyl-[protein] + UTP = O-(5'-uridylyl)-L-tyrosyl-[protein] + diphosphate. Its function is as follows. Nucleotidyltransferase involved in the post-translational modification of proteins. It can catalyze the addition of adenosine monophosphate (AMP) or uridine monophosphate (UMP) to a protein, resulting in modifications known as AMPylation and UMPylation. The polypeptide is Protein nucleotidyltransferase YdiU (Herminiimonas arsenicoxydans).